Here is a 423-residue protein sequence, read N- to C-terminus: Serine--tRNA ligase (423 aa).

231 to 233 lines the L-serine pocket; the sequence is TGE. 262–264 contacts ATP; that stretch reads RQE. Glu-285 contacts L-serine. 349 to 352 is an ATP binding site; it reads EISS. Residue Ser-385 coordinates L-serine.

It belongs to the class-II aminoacyl-tRNA synthetase family. Type-1 seryl-tRNA synthetase subfamily. In terms of assembly, homodimer. The tRNA molecule binds across the dimer.

The protein resides in the cytoplasm. The catalysed reaction is tRNA(Ser) + L-serine + ATP = L-seryl-tRNA(Ser) + AMP + diphosphate + H(+). It carries out the reaction tRNA(Sec) + L-serine + ATP = L-seryl-tRNA(Sec) + AMP + diphosphate + H(+). Its pathway is aminoacyl-tRNA biosynthesis; selenocysteinyl-tRNA(Sec) biosynthesis; L-seryl-tRNA(Sec) from L-serine and tRNA(Sec): step 1/1. Catalyzes the attachment of serine to tRNA(Ser). Is also able to aminoacylate tRNA(Sec) with serine, to form the misacylated tRNA L-seryl-tRNA(Sec), which will be further converted into selenocysteinyl-tRNA(Sec). In Phytoplasma mali (strain AT), this protein is Serine--tRNA ligase.